The sequence spans 480 residues: tRNA (uracil-5-)-methyltransferase homolog B (480 aa).

S-adenosyl-L-methionine contacts are provided by Gln299, Glu349, and Asn399. The Nucleophile role is filled by Cys427. Glu473 (proton acceptor) is an active-site residue.

The protein belongs to the class I-like SAM-binding methyltransferase superfamily. RNA M5U methyltransferase family.

It is found in the mitochondrion. It carries out the reaction uridine(54) in tRNA + S-adenosyl-L-methionine = 5-methyluridine(54) in tRNA + S-adenosyl-L-homocysteine + H(+). The enzyme catalyses a uridine in 12S rRNA + S-adenosyl-L-methionine = a 5-methyluridine in 12S rRNA + S-adenosyl-L-homocysteine + H(+). Its function is as follows. Mitochondrial S-adenosyl-L-methionine-dependent methyltransferase that catalyzes the formation of 5-methyl-uridine in tRNAs and 12S rRNA. Catalyzes the methylation of uridine at position 54 (m5U54) in all tRNAs. Specifically methylates the uridine in position 429 of 12S rRNA (m5U429). Does not affect RNA stability or mitochondrial translation. The chain is tRNA (uracil-5-)-methyltransferase homolog B (trmt2b) from Danio rerio (Zebrafish).